Here is a 191-residue protein sequence, read N- to C-terminus: Protein Ves (191 aa).

The protein belongs to the Ves family.

In Shigella boydii serotype 18 (strain CDC 3083-94 / BS512), this protein is Protein Ves.